Consider the following 196-residue polypeptide: Small heat shock protein C3 (196 aa).

The 109-residue stretch at 88-196 folds into the sHSP domain; it reads SAYSSSAIRT…EKDAKEIPIQ (109 aa).

Belongs to the small heat shock protein (HSP20) family.

The polypeptide is Small heat shock protein C3 (hspc3-1) (Rickettsia felis (strain ATCC VR-1525 / URRWXCal2) (Rickettsia azadi)).